The following is an 84-amino-acid chain: Putative glutaredoxin MT3292 (84 aa).

The Glutaredoxin domain occupies 1 to 84 (MITAALTIYT…VKAKLVKIAG (84 aa)).

The sequence is that of Putative glutaredoxin MT3292 from Mycobacterium tuberculosis (strain CDC 1551 / Oshkosh).